We begin with the raw amino-acid sequence, 224 residues long: Enolase-phosphatase E1 (224 aa).

Belongs to the HAD-like hydrolase superfamily. MasA/MtnC family. In terms of assembly, monomer. Mg(2+) is required as a cofactor.

It catalyses the reaction 5-methylsulfanyl-2,3-dioxopentyl phosphate + H2O = 1,2-dihydroxy-5-(methylsulfanyl)pent-1-en-3-one + phosphate. It participates in amino-acid biosynthesis; L-methionine biosynthesis via salvage pathway; L-methionine from S-methyl-5-thio-alpha-D-ribose 1-phosphate: step 3/6. It functions in the pathway amino-acid biosynthesis; L-methionine biosynthesis via salvage pathway; L-methionine from S-methyl-5-thio-alpha-D-ribose 1-phosphate: step 4/6. In terms of biological role, bifunctional enzyme that catalyzes the enolization of 2,3-diketo-5-methylthiopentyl-1-phosphate (DK-MTP-1-P) into the intermediate 2-hydroxy-3-keto-5-methylthiopentenyl-1-phosphate (HK-MTPenyl-1-P), which is then dephosphorylated to form the acireductone 1,2-dihydroxy-3-keto-5-methylthiopentene (DHK-MTPene). The chain is Enolase-phosphatase E1 from Thioalkalivibrio sulfidiphilus (strain HL-EbGR7).